A 273-amino-acid chain; its full sequence is S-adenosylmethionine decarboxylase proenzyme (273 aa).

The active-site Schiff-base intermediate with substrate; via pyruvic acid is the Ser-118. At Ser-118 the chain carries Pyruvic acid (Ser); by autocatalysis. Residue His-123 is the Proton acceptor; for processing activity of the active site. Cys-146 acts as the Proton donor; for catalytic activity in catalysis.

The protein belongs to the prokaryotic AdoMetDC family. Type 2 subfamily. Heterooctamer of four alpha and four beta chains arranged as a tetramer of alpha/beta heterodimers. It depends on pyruvate as a cofactor. Post-translationally, is synthesized initially as an inactive proenzyme. Formation of the active enzyme involves a self-maturation process in which the active site pyruvoyl group is generated from an internal serine residue via an autocatalytic post-translational modification. Two non-identical subunits are generated from the proenzyme in this reaction, and the pyruvate is formed at the N-terminus of the alpha chain, which is derived from the carboxyl end of the proenzyme. The post-translation cleavage follows an unusual pathway, termed non-hydrolytic serinolysis, in which the side chain hydroxyl group of the serine supplies its oxygen atom to form the C-terminus of the beta chain, while the remainder of the serine residue undergoes an oxidative deamination to produce ammonia and the pyruvoyl group blocking the N-terminus of the alpha chain.

The catalysed reaction is S-adenosyl-L-methionine + H(+) = S-adenosyl 3-(methylsulfanyl)propylamine + CO2. Its pathway is amine and polyamine biosynthesis; S-adenosylmethioninamine biosynthesis; S-adenosylmethioninamine from S-adenosyl-L-methionine: step 1/1. Functionally, catalyzes the decarboxylation of S-adenosylmethionine to S-adenosylmethioninamine (dcAdoMet), the propylamine donor required for the synthesis of the polyamines spermine and spermidine from the diamine putrescine. This chain is S-adenosylmethionine decarboxylase proenzyme, found in Alkalilimnicola ehrlichii (strain ATCC BAA-1101 / DSM 17681 / MLHE-1).